A 257-amino-acid chain; its full sequence is uncharacterized protein (257 aa).

The span at 74–83 (LKDDLTRDNS) shows a compositional bias: basic and acidic residues. Disordered regions lie at residues 74-115 (LKDD…TQKR) and 209-257 (PYLN…YDSF). A compositionally biased stretch (polar residues) spans 100–113 (SFQNMNSSMPSSTQ). Residues 216–236 (SEDDTDSSIVEVETDYSEEEK) show a composition bias toward acidic residues.

It belongs to the asfivirus DP238L family.

This is an uncharacterized protein from Ornithodoros (relapsing fever ticks).